The chain runs to 331 residues: Aspartate carbamoyltransferase catalytic subunit (331 aa).

Arg76 and Thr77 together coordinate carbamoyl phosphate. L-aspartate is bound at residue Lys104. Residues Arg126, His154, and Gln157 each coordinate carbamoyl phosphate. Residues Arg187 and Arg246 each coordinate L-aspartate. 2 residues coordinate carbamoyl phosphate: Gly287 and Pro288.

Belongs to the aspartate/ornithine carbamoyltransferase superfamily. ATCase family. In terms of assembly, heterododecamer (2C3:3R2) of six catalytic PyrB chains organized as two trimers (C3), and six regulatory PyrI chains organized as three dimers (R2).

It carries out the reaction carbamoyl phosphate + L-aspartate = N-carbamoyl-L-aspartate + phosphate + H(+). Its pathway is pyrimidine metabolism; UMP biosynthesis via de novo pathway; (S)-dihydroorotate from bicarbonate: step 2/3. In terms of biological role, catalyzes the condensation of carbamoyl phosphate and aspartate to form carbamoyl aspartate and inorganic phosphate, the committed step in the de novo pyrimidine nucleotide biosynthesis pathway. The sequence is that of Aspartate carbamoyltransferase catalytic subunit from Dehalococcoides mccartyi (strain ATCC BAA-2100 / JCM 16839 / KCTC 5957 / BAV1).